A 161-amino-acid polypeptide reads, in one-letter code: Cytochrome b6-f complex subunit 4 (161 aa).

The next 3 helical transmembrane spans lie at 37-57 (LLYI…GLAV), 96-116 (LLGV…PFIE), and 132-152 (TVFL…TFPI).

The protein belongs to the cytochrome b family. PetD subfamily. As to quaternary structure, the 4 large subunits of the cytochrome b6-f complex are cytochrome b6, subunit IV (17 kDa polypeptide, PetD), cytochrome f and the Rieske protein, while the 4 small subunits are PetG, PetL, PetM and PetN. The complex functions as a dimer.

It localises to the cellular thylakoid membrane. In terms of biological role, component of the cytochrome b6-f complex, which mediates electron transfer between photosystem II (PSII) and photosystem I (PSI), cyclic electron flow around PSI, and state transitions. In Cyanothece sp. (strain PCC 7425 / ATCC 29141), this protein is Cytochrome b6-f complex subunit 4.